The following is an 83-amino-acid chain: Colicin-E5 immunity protein (83 aa).

Its function is as follows. This protein is able to protect a cell, which harbors the plasmid ColE5 encoding colicin E5, against colicin E5. This is Colicin-E5 immunity protein (imm) from Escherichia coli.